The sequence spans 444 residues: Glutamate dehydrogenase (444 aa).

Residue Lys-124 is part of the active site.

It belongs to the Glu/Leu/Phe/Val dehydrogenases family. As to quaternary structure, homohexamer.

It catalyses the reaction L-glutamate + NAD(+) + H2O = 2-oxoglutarate + NH4(+) + NADH + H(+). The enzyme catalyses L-glutamate + NADP(+) + H2O = 2-oxoglutarate + NH4(+) + NADPH + H(+). In Bacteroides thetaiotaomicron (strain ATCC 29148 / DSM 2079 / JCM 5827 / CCUG 10774 / NCTC 10582 / VPI-5482 / E50), this protein is Glutamate dehydrogenase (gdhA).